The primary structure comprises 185 residues: Peptidyl-tRNA hydrolase (185 aa).

Tyr14 contacts tRNA. Residue His19 is the Proton acceptor of the active site. The tRNA site is built by Tyr64, Asn66, and Asn112.

This sequence belongs to the PTH family. In terms of assembly, monomer.

Its subcellular location is the cytoplasm. The enzyme catalyses an N-acyl-L-alpha-aminoacyl-tRNA + H2O = an N-acyl-L-amino acid + a tRNA + H(+). Functionally, hydrolyzes ribosome-free peptidyl-tRNAs (with 1 or more amino acids incorporated), which drop off the ribosome during protein synthesis, or as a result of ribosome stalling. In terms of biological role, catalyzes the release of premature peptidyl moieties from peptidyl-tRNA molecules trapped in stalled 50S ribosomal subunits, and thus maintains levels of free tRNAs and 50S ribosomes. This is Peptidyl-tRNA hydrolase from Exiguobacterium sibiricum (strain DSM 17290 / CCUG 55495 / CIP 109462 / JCM 13490 / 255-15).